The chain runs to 376 residues: Dihydroorotate dehydrogenase (quinone) (376 aa).

FMN-binding positions include 74–78 (AGFDK) and Thr-98. Lys-78 contributes to the substrate binding site. 123-127 (NHMGF) is a substrate binding site. Residues Asn-152 and Asn-185 each coordinate FMN. Position 185 (Asn-185) interacts with substrate. Ser-188 (nucleophile) is an active-site residue. Asn-190 provides a ligand contact to substrate. Positions 223 and 251 each coordinate FMN. 252–253 (NT) is a substrate binding site. Residues Gly-280, Gly-309, and 330–331 (YT) contribute to the FMN site. Residues 352 to 376 (RNPAPSSPERMPTGIQSGRKIVMDP) are disordered.

Belongs to the dihydroorotate dehydrogenase family. Type 2 subfamily. In terms of assembly, monomer. Requires FMN as cofactor.

It localises to the cell membrane. It catalyses the reaction (S)-dihydroorotate + a quinone = orotate + a quinol. The protein operates within pyrimidine metabolism; UMP biosynthesis via de novo pathway; orotate from (S)-dihydroorotate (quinone route): step 1/1. Catalyzes the conversion of dihydroorotate to orotate with quinone as electron acceptor. This is Dihydroorotate dehydrogenase (quinone) from Synechococcus sp. (strain JA-3-3Ab) (Cyanobacteria bacterium Yellowstone A-Prime).